The following is a 326-amino-acid chain: DNA-directed RNA polymerase subunit alpha (326 aa).

Positions 1 to 232 are alpha N-terminal domain (alpha-NTD); it reads MQGSARDFLK…EQLSSFVELE (232 aa). Positions 246–326 are alpha C-terminal domain (alpha-CTD); sequence FDPQLLAAVD…NWPPVDLMSE (81 aa).

Belongs to the RNA polymerase alpha chain family. In terms of assembly, homodimer. The RNAP catalytic core consists of 2 alpha, 1 beta, 1 beta' and 1 omega subunit. When a sigma factor is associated with the core the holoenzyme is formed, which can initiate transcription.

It carries out the reaction RNA(n) + a ribonucleoside 5'-triphosphate = RNA(n+1) + diphosphate. Its function is as follows. DNA-dependent RNA polymerase catalyzes the transcription of DNA into RNA using the four ribonucleoside triphosphates as substrates. This is DNA-directed RNA polymerase subunit alpha from Vesicomyosocius okutanii subsp. Calyptogena okutanii (strain HA).